The primary structure comprises 450 residues: tRNA-2-methylthio-N(6)-dimethylallyladenosine synthase (450 aa).

The MTTase N-terminal domain maps to 17 to 131 (KKFFVKTYGC…LNHVLDEVLA (115 aa)). Positions 26, 62, 94, 168, 172, and 175 each coordinate [4Fe-4S] cluster. The 232-residue stretch at 154-385 (REDQIKAYVS…LQLQDTIYMK (232 aa)) folds into the Radical SAM core domain. One can recognise a TRAM domain in the interval 388 to 450 (QAFLGQTVEV…SHQTLLGDLQ (63 aa)).

Belongs to the methylthiotransferase family. MiaB subfamily. Monomer. [4Fe-4S] cluster serves as cofactor.

It localises to the cytoplasm. It carries out the reaction N(6)-dimethylallyladenosine(37) in tRNA + (sulfur carrier)-SH + AH2 + 2 S-adenosyl-L-methionine = 2-methylsulfanyl-N(6)-dimethylallyladenosine(37) in tRNA + (sulfur carrier)-H + 5'-deoxyadenosine + L-methionine + A + S-adenosyl-L-homocysteine + 2 H(+). Its function is as follows. Catalyzes the methylthiolation of N6-(dimethylallyl)adenosine (i(6)A), leading to the formation of 2-methylthio-N6-(dimethylallyl)adenosine (ms(2)i(6)A) at position 37 in tRNAs that read codons beginning with uridine. The polypeptide is tRNA-2-methylthio-N(6)-dimethylallyladenosine synthase (Protochlamydia amoebophila (strain UWE25)).